The sequence spans 71 residues: Translational regulator CsrA (71 aa).

It belongs to the CsrA/RsmA family. In terms of assembly, homodimer; the beta-strands of each monomer intercalate to form a hydrophobic core, while the alpha-helices form wings that extend away from the core.

The protein resides in the cytoplasm. Its function is as follows. A translational regulator that binds mRNA to regulate translation initiation and/or mRNA stability. Usually binds in the 5'-UTR at or near the Shine-Dalgarno sequence preventing ribosome-binding, thus repressing translation. Its main target seems to be the major flagellin gene, while its function is anatagonized by FliW. This is Translational regulator CsrA from Clostridium botulinum (strain Alaska E43 / Type E3).